The primary structure comprises 175 residues: Protein tyrosine phosphatase PRL-1 (175 aa).

In terms of domain architecture, Tyrosine-protein phosphatase spans 15 to 172 (KPSRVLFHFL…YKRRHQGAGC (158 aa)). Residues cysteine 53 and cysteine 114 are joined by a disulfide bond. The active-site Proton donor is the aspartate 76. Cysteine 114 (phosphocysteine intermediate) is an active-site residue. Residue 116–120 (AGLGR) coordinates substrate. Cysteine 172 is modified (cysteine methyl ester). Cysteine 172 carries the S-farnesyl cysteine lipid modification. Positions 173–175 (VIM) are cleaved as a propeptide — removed in mature form.

This sequence belongs to the protein-tyrosine phosphatase family.

It is found in the cytoplasm. The protein localises to the mitochondrion matrix. Its subcellular location is the kinetoplast. The protein resides in the secreted. It localises to the extracellular exosome. It carries out the reaction O-phospho-L-tyrosyl-[protein] + H2O = L-tyrosyl-[protein] + phosphate. Activated in a reduced environment which promotes the reduction of the disulfide bond between the regulatory Cys-53 and catalytic Cys-114 residues. Functionally, has protein tyrosine phosphatase activity and may act as a virulence factor to support intracellular survival in host macrophages. This Leishmania major protein is Protein tyrosine phosphatase PRL-1.